The chain runs to 117 residues: Ribosome-binding factor A (117 aa).

This sequence belongs to the RbfA family. In terms of assembly, monomer. Binds 30S ribosomal subunits, but not 50S ribosomal subunits or 70S ribosomes.

The protein resides in the cytoplasm. Functionally, one of several proteins that assist in the late maturation steps of the functional core of the 30S ribosomal subunit. Associates with free 30S ribosomal subunits (but not with 30S subunits that are part of 70S ribosomes or polysomes). Required for efficient processing of 16S rRNA. May interact with the 5'-terminal helix region of 16S rRNA. This Streptococcus thermophilus (strain CNRZ 1066) protein is Ribosome-binding factor A.